The following is a 757-amino-acid chain: Polyribonucleotide nucleotidyltransferase (757 aa).

2 residues coordinate Mg(2+): Asp-525 and Asp-531. Residues 591–650 enclose the KH domain; it reads PRVISVNIPVDKIGELIGPKGKTINAIQDETGADISIEEDGTVYIGAVDGPSADAARAQV. The S1 motif domain maps to 662–734; the sequence is GESFLGTVVK…DRGKLSLAPV (73 aa). Residues 737 to 757 form a disordered region; it reads ETADQEGRDAASHGSEAPAEG.

The protein belongs to the polyribonucleotide nucleotidyltransferase family. Requires Mg(2+) as cofactor.

Its subcellular location is the cytoplasm. It carries out the reaction RNA(n+1) + phosphate = RNA(n) + a ribonucleoside 5'-diphosphate. Its function is as follows. Involved in mRNA degradation. Catalyzes the phosphorolysis of single-stranded polyribonucleotides processively in the 3'- to 5'-direction. The polypeptide is Polyribonucleotide nucleotidyltransferase (Clavibacter michiganensis subsp. michiganensis (strain NCPPB 382)).